The sequence spans 396 residues: Formate-dependent phosphoribosylglycinamide formyltransferase (396 aa).

N(1)-(5-phospho-beta-D-ribosyl)glycinamide contacts are provided by residues 24–25 (EL) and glutamate 84. ATP is bound by residues arginine 116, lysine 157, 162–167 (SSGKGQ), 197–200 (EGFV), and glutamate 205. An ATP-grasp domain is found at 121 to 310 (RLAAETLGIK…EFALHVRAIL (190 aa)). Positions 269 and 281 each coordinate Mg(2+). N(1)-(5-phospho-beta-D-ribosyl)glycinamide is bound by residues aspartate 288, lysine 359, and 366-367 (RR).

It belongs to the PurK/PurT family. In terms of assembly, homodimer.

The catalysed reaction is N(1)-(5-phospho-beta-D-ribosyl)glycinamide + formate + ATP = N(2)-formyl-N(1)-(5-phospho-beta-D-ribosyl)glycinamide + ADP + phosphate + H(+). Its pathway is purine metabolism; IMP biosynthesis via de novo pathway; N(2)-formyl-N(1)-(5-phospho-D-ribosyl)glycinamide from N(1)-(5-phospho-D-ribosyl)glycinamide (formate route): step 1/1. Its function is as follows. Involved in the de novo purine biosynthesis. Catalyzes the transfer of formate to 5-phospho-ribosyl-glycinamide (GAR), producing 5-phospho-ribosyl-N-formylglycinamide (FGAR). Formate is provided by PurU via hydrolysis of 10-formyl-tetrahydrofolate. The polypeptide is Formate-dependent phosphoribosylglycinamide formyltransferase (Psychromonas ingrahamii (strain DSM 17664 / CCUG 51855 / 37)).